The sequence spans 135 residues: Regulator of ribonuclease activity B (135 aa).

A disordered region spans residues 114 to 135 (WGTYFESDEDDEEDESEDKPEA). Over residues 119–135 (ESDEDDEEDESEDKPEA) the composition is skewed to acidic residues.

Belongs to the RraB family. In terms of assembly, interacts with the C-terminal region of Rne.

Its subcellular location is the cytoplasm. In terms of biological role, globally modulates RNA abundance by binding to RNase E (Rne) and regulating its endonucleolytic activity. Can modulate Rne action in a substrate-dependent manner by altering the composition of the degradosome. In Photobacterium profundum (strain SS9), this protein is Regulator of ribonuclease activity B.